An 88-amino-acid polypeptide reads, in one-letter code: UPF0223 protein BH2638 (88 aa).

It belongs to the UPF0223 family.

This is UPF0223 protein BH2638 from Halalkalibacterium halodurans (strain ATCC BAA-125 / DSM 18197 / FERM 7344 / JCM 9153 / C-125) (Bacillus halodurans).